Consider the following 307-residue polypeptide: Elongation factor Ts (307 aa).

The tract at residues 79–82 (TDFV) is involved in Mg(2+) ion dislocation from EF-Tu.

It belongs to the EF-Ts family.

The protein resides in the cytoplasm. Functionally, associates with the EF-Tu.GDP complex and induces the exchange of GDP to GTP. It remains bound to the aminoacyl-tRNA.EF-Tu.GTP complex up to the GTP hydrolysis stage on the ribosome. In Sinorhizobium fredii (strain NBRC 101917 / NGR234), this protein is Elongation factor Ts.